Here is a 374-residue protein sequence, read N- to C-terminus: MEMO1 family protein aq_1336 (374 aa).

Belongs to the MEMO1 family.

In Aquifex aeolicus (strain VF5), this protein is MEMO1 family protein aq_1336.